The chain runs to 266 residues: Indole-3-glycerol phosphate synthase (266 aa).

This sequence belongs to the TrpC family.

The catalysed reaction is 1-(2-carboxyphenylamino)-1-deoxy-D-ribulose 5-phosphate + H(+) = (1S,2R)-1-C-(indol-3-yl)glycerol 3-phosphate + CO2 + H2O. It participates in amino-acid biosynthesis; L-tryptophan biosynthesis; L-tryptophan from chorismate: step 4/5. The sequence is that of Indole-3-glycerol phosphate synthase from Opitutus terrae (strain DSM 11246 / JCM 15787 / PB90-1).